The primary structure comprises 186 residues: Tumor necrosis factor alpha-induced protein 8-like protein 2 (186 aa).

Belongs to the TNFAIP8 family. TNFAIP8L2 subfamily.

Its function is as follows. Acts as a negative regulator of innate and adaptive immunity by maintaining immune homeostasis. Negative regulator of Toll-like receptor and T-cell receptor function. Prevents hyperresponsiveness of the immune system and maintains immune homeostasis. Inhibits jun/ap1 and NF-kappa-B activation. Promotes Fas-induced apoptosis. This Salmo salar (Atlantic salmon) protein is Tumor necrosis factor alpha-induced protein 8-like protein 2 (tnfaip8l2).